The following is a 318-amino-acid chain: NADH-ubiquinone oxidoreductase chain 1 (318 aa).

Helical transmembrane passes span 2 to 22 (FMIN…FLTL), 70 to 90 (MFII…SPLP), 100 to 120 (LGVL…LWSG), 136 to 156 (VAQT…VLLM), 172 to 192 (LWLL…TLAE), 222 to 242 (LFFL…AILF), 253 to 273 (ELYT…FLWI), and 294 to 314 (LPLT…TASI).

This sequence belongs to the complex I subunit 1 family. Core subunit of respiratory chain NADH dehydrogenase (Complex I) which is composed of 45 different subunits.

It is found in the mitochondrion inner membrane. The catalysed reaction is a ubiquinone + NADH + 5 H(+)(in) = a ubiquinol + NAD(+) + 4 H(+)(out). Core subunit of the mitochondrial membrane respiratory chain NADH dehydrogenase (Complex I) which catalyzes electron transfer from NADH through the respiratory chain, using ubiquinone as an electron acceptor. Essential for the catalytic activity and assembly of complex I. This chain is NADH-ubiquinone oxidoreductase chain 1 (MT-ND1), found in Balaenoptera musculus (Blue whale).